Consider the following 434-residue polypeptide: MLGAVKMEGHEATDWSSYYGEPEAYSSVGNMNAGLSMNPMNTYMSMSAMSTSANMTAGSMNMSYVNTGMSPSLTGMSPGTGAMTGMGTGVASMASHLSPSMSPMSAQATSMNALAPYTNMNSMSPIYGQSNINRSRDPKTYRRSYTHAKPPYSYISLITMAIQQSPNKMLTLSEIYQWIMDLFPFYRQNQQRWQNSIRHSLSFNDCFLKVPRSPDKPGKGSFWTLHPDSGNMFENGCYLRRQKRFKCEKKPSLREGGGKKLSEGSSSVGSAANSSSESSVGNESPHSSSSPCQEQKRSLVDMKSSQGLSPDHAASPASQAQHLLSQHHSVLSHEAQSHLKPEHHYSFNHPFSINNLMSSEQQHHHHHHHNHHHHHKMDLKAYEQVMHYSGYGSPMTGSLAMSTVTNKSGLESSPISSDTSYYQGVYSRPIMNSS.

Positions 149–243 (KPPYSYISLI…ENGCYLRRQK (95 aa)) form a DNA-binding region, fork-head. A compositionally biased stretch (basic and acidic residues) spans 249–262 (KKPSLREGGGKKLS). The tract at residues 249-339 (KKPSLREGGG…VLSHEAQSHL (91 aa)) is disordered. Composition is skewed to low complexity over residues 263–291 (EGSSSVGSAANSSSESSVGNESPHSSSSP) and 317–333 (ASQAQHLLSQHHSVLSH).

Its subcellular location is the nucleus. Its function is as follows. Acts as a transcriptional activator during early development, limiting the extent of mesoderm formation in the gastrula. Binds to DNA via the target sequence 5'-GT[AC]AACA-3', with 5'-GTAAACA-3' being the preferred binding site. This is Forkhead box protein A2 from Xenopus tropicalis (Western clawed frog).